Consider the following 78-residue polypeptide: Large ribosomal subunit protein bL28 (78 aa).

The protein belongs to the bacterial ribosomal protein bL28 family.

The polypeptide is Large ribosomal subunit protein bL28 (Psychrobacter sp. (strain PRwf-1)).